A 353-amino-acid chain; its full sequence is Protein RecA (353 aa).

An ATP-binding site is contributed by 73–80; the sequence is GPESSGKT.

The protein belongs to the RecA family.

It localises to the cytoplasm. Can catalyze the hydrolysis of ATP in the presence of single-stranded DNA, the ATP-dependent uptake of single-stranded DNA by duplex DNA, and the ATP-dependent hybridization of homologous single-stranded DNAs. It interacts with LexA causing its activation and leading to its autocatalytic cleavage. In Bordetella avium (strain 197N), this protein is Protein RecA.